The chain runs to 469 residues: Phosphoenolpyruvate carboxylase (469 aa).

The protein belongs to the PEPCase type 2 family. In terms of assembly, homotetramer. Requires Mg(2+) as cofactor.

It catalyses the reaction oxaloacetate + phosphate = phosphoenolpyruvate + hydrogencarbonate. In terms of biological role, catalyzes the irreversible beta-carboxylation of phosphoenolpyruvate (PEP) to form oxaloacetate (OAA), a four-carbon dicarboxylic acid source for the tricarboxylic acid cycle. The polypeptide is Phosphoenolpyruvate carboxylase (Pyrococcus horikoshii (strain ATCC 700860 / DSM 12428 / JCM 9974 / NBRC 100139 / OT-3)).